We begin with the raw amino-acid sequence, 184 residues long: Helix-loop-helix protein ngn-1 (184 aa).

The interval 1–55 (MYHHSPFYPHHLQTGEQDLDMERENDMDQNSKNSTQKPVKREKRRYRCRKRSPAT) is disordered. Over residues 28 to 37 (DQNSKNSTQK) the composition is skewed to polar residues. Residues 38-52 (PVKREKRRYRCRKRS) show a composition bias toward basic residues. Residues 62 to 75 (VRRDKANARERRRM) are basic motif. The bHLH domain occupies 62 to 114 (VRRDKANARERRRMNSLNDALEHLRGILPALPDEPKMTKIETLRKAQEYIASL). A helix-loop-helix motif region spans residues 76-114 (NSLNDALEHLRGILPALPDEPKMTKIETLRKAQEYIASL). The interval 164 to 184 (SNPPSQMYYHHHHQSPSFPHH) is disordered. Residues 172-184 (YHHHHQSPSFPHH) show a composition bias toward basic residues.

As to quaternary structure, interacts with hlh-2; the interaction is direct.

The protein resides in the nucleus. Functionally, acts as a transcriptional regulator. Regulates expression of various genes, including homeobox protein unc-42 and helix-loop-helix protein hlh-34. Required for embryonic viability, neuromuscular development, organization of the nerve ring and neuronal cell body location. Regulates AIY neuron axon morphology and cell fate. Plays a role in cell autonomously establishing a neuronal left-right asymmetry. Involved in regulating glial specification. This Caenorhabditis elegans protein is Helix-loop-helix protein ngn-1.